We begin with the raw amino-acid sequence, 535 residues long: Cytochrome c oxidase subunit 1 (535 aa).

The chain crosses the membrane as a helical span at residues 21-43 (VLYFIFALFSAMIGTGLSAIIRL). Residues glutamate 44 and glycine 49 each contribute to the Ca(2+) site. The next 6 membrane-spanning stretches (helical) occupy residues 63–85 (VITA…GGFG), 106–128 (ISFW…EAGA), 153–175 (IFSL…TTFI), 188–210 (PLFA…VLAA), 242–264 (YWWN…SHAV), and 271–293 (PVFG…FCVW). A Fe(II)-heme a-binding site is contributed by histidine 67. Histidine 246 lines the Cu cation pocket. Residues 246–250 (HPEVY) constitute a cross-link (1'-histidyl-3'-tyrosine (His-Tyr)). Residue tyrosine 250 coordinates O2. Positions 295 and 296 each coordinate Cu cation. Helical transmembrane passes span 308–330 (AYFT…SWLA) and 342–364 (TALF…VVLA). Histidine 373 and aspartate 374 together coordinate Mg(2+). 3 helical membrane-spanning segments follow: residues 379 to 401 (VAHF…WYLW), 414 to 436 (LSHI…MHFL), and 456 to 478 (NQVA…YVVY). Histidine 381 contacts heme a3. Histidine 383 contacts Fe(II)-heme a.

Belongs to the heme-copper respiratory oxidase family. As to quaternary structure, component of the cytochrome c oxidase (complex IV, CIV), a multisubunit enzyme composed of a catalytic core of 3 subunits and several supernumerary subunits. The complex exists as a monomer or a dimer and forms supercomplexes (SCs) in the inner mitochondrial membrane with ubiquinol-cytochrome c oxidoreductase (cytochrome b-c1 complex, complex III, CIII). Requires heme as cofactor. The cofactor is Cu cation.

The protein localises to the mitochondrion inner membrane. It carries out the reaction 4 Fe(II)-[cytochrome c] + O2 + 8 H(+)(in) = 4 Fe(III)-[cytochrome c] + 2 H2O + 4 H(+)(out). The protein operates within energy metabolism; oxidative phosphorylation. In terms of biological role, component of the cytochrome c oxidase, the last enzyme in the mitochondrial electron transport chain which drives oxidative phosphorylation. The respiratory chain contains 3 multisubunit complexes succinate dehydrogenase (complex II, CII), ubiquinol-cytochrome c oxidoreductase (cytochrome b-c1 complex, complex III, CIII) and cytochrome c oxidase (complex IV, CIV), that cooperate to transfer electrons derived from NADH and succinate to molecular oxygen, creating an electrochemical gradient over the inner membrane that drives transmembrane transport and the ATP synthase. Cytochrome c oxidase is the component of the respiratory chain that catalyzes the reduction of oxygen to water. Electrons originating from reduced cytochrome c in the intermembrane space (IMS) are transferred via the dinuclear copper A center (CU(A)) of subunit 2 and heme A of subunit 1 to the active site in subunit 1, a binuclear center (BNC) formed by heme A3 and copper B (CU(B)). The BNC reduces molecular oxygen to 2 water molecules using 4 electrons from cytochrome c in the IMS and 4 protons from the mitochondrial matrix. The protein is Cytochrome c oxidase subunit 1 (COX1) of Yarrowia lipolytica (strain CLIB 122 / E 150) (Yeast).